A 127-amino-acid chain; its full sequence is Aspartate 1-decarboxylase (127 aa).

Residue serine 25 is the Schiff-base intermediate with substrate; via pyruvic acid of the active site. Serine 25 carries the post-translational modification Pyruvic acid (Ser). Threonine 57 contacts substrate. The active-site Proton donor is the tyrosine 58. 73 to 75 (GAA) provides a ligand contact to substrate.

It belongs to the PanD family. Heterooctamer of four alpha and four beta subunits. The cofactor is pyruvate. Post-translationally, is synthesized initially as an inactive proenzyme, which is activated by self-cleavage at a specific serine bond to produce a beta-subunit with a hydroxyl group at its C-terminus and an alpha-subunit with a pyruvoyl group at its N-terminus.

The protein localises to the cytoplasm. The enzyme catalyses L-aspartate + H(+) = beta-alanine + CO2. It participates in cofactor biosynthesis; (R)-pantothenate biosynthesis; beta-alanine from L-aspartate: step 1/1. In terms of biological role, catalyzes the pyruvoyl-dependent decarboxylation of aspartate to produce beta-alanine. The protein is Aspartate 1-decarboxylase of Bacillus cereus (strain G9842).